The chain runs to 418 residues: Thyroid hormone receptor alpha-B (418 aa).

The disordered stretch occupies residues methionine 1–aspartate 40. The segment at methionine 1–proline 60 is modulating. 2 NR C4-type zinc fingers span residues cysteine 61–cysteine 81 and cysteine 99–cysteine 123. A DNA-binding region (nuclear receptor) is located at residues cysteine 61–methionine 128. The 245-residue stretch at glutamate 171 to aspartate 415 folds into the NR LBD domain.

This sequence belongs to the nuclear hormone receptor family. NR1 subfamily. As to quaternary structure, binds to thyroid hormone receptor element (TRE) weakly as homodimers and monomers, but binds TRE with much higher affinity as heterodimers with retinoid X receptors. Can bind DNA as a heterodimer with either rxra or rxrg.

The protein resides in the nucleus. In terms of biological role, high affinity receptor for triiodothyronine (T3). This Xenopus laevis (African clawed frog) protein is Thyroid hormone receptor alpha-B (thra-b).